A 177-amino-acid polypeptide reads, in one-letter code: Inorganic pyrophosphatase (177 aa).

Substrate is bound by residues lysine 31, arginine 45, and tyrosine 57. Positions 67, 72, and 104 each coordinate Mg(2+). Tyrosine 142 lines the substrate pocket.

The protein belongs to the PPase family. In terms of assembly, homohexamer. It depends on Mg(2+) as a cofactor.

Its subcellular location is the cytoplasm. The catalysed reaction is diphosphate + H2O = 2 phosphate + H(+). Functionally, catalyzes the hydrolysis of inorganic pyrophosphate (PPi) forming two phosphate ions. The sequence is that of Inorganic pyrophosphatase from Neisseria meningitidis serogroup B (strain ATCC BAA-335 / MC58).